The primary structure comprises 79 residues: Conotoxin ArMSGL-021 (79 aa).

The first 20 residues, 1–20 (MSRLGIMVLTLLLLVFIVTS), serve as a signal peptide directing secretion. Residues 21 to 44 (HQDAGEKQATHRGAINFRWRRSLI) constitute a propeptide that is removed on maturation. 3 cysteine pairs are disulfide-bonded: Cys-52–Cys-64, Cys-56–Cys-73, and Cys-63–Cys-77. Residue Leu-78 is modified to Leucine amide.

It belongs to the conotoxin O3 superfamily. As to expression, expressed by the venom duct.

It localises to the secreted. This chain is Conotoxin ArMSGL-021, found in Conus arenatus (Sand-dusted cone).